We begin with the raw amino-acid sequence, 121 residues long: Putative membrane protein insertion efficiency factor (121 aa).

Belongs to the UPF0161 family.

The protein resides in the cell inner membrane. In terms of biological role, could be involved in insertion of integral membrane proteins into the membrane. This is Putative membrane protein insertion efficiency factor from Rhodopseudomonas palustris (strain HaA2).